The following is a 240-amino-acid chain: uncharacterized protein (240 aa).

The segment at 3–27 adopts a C2H2-type zinc-finger fold; the sequence is LKCLECDKLLSSIEMAEFHSTKTSH. 2 disordered regions span residues 21–43 and 120–171; these read HSTK…RSPE and AEIE…RFSI. Residues 120 to 136 are compositionally biased toward basic and acidic residues; the sequence is AEIERDKKRRAAERENK. A compositionally biased stretch (low complexity) spans 155 to 166; it reads SSSTCTRTPPTS.

This is an uncharacterized protein from Schizosaccharomyces pombe (strain 972 / ATCC 24843) (Fission yeast).